Consider the following 240-residue polypeptide: Extracellular superoxide dismutase [Cu-Zn] (240 aa).

The signal sequence occupies residues 1–18 (MLALLCSCLLLAAGASDA). 2 disulfide bridges follow: cysteine 63–cysteine 208 and cysteine 125–cysteine 207. A glycan (N-linked (GlcNAc...) asparagine) is linked at asparagine 107. Cu cation contacts are provided by histidine 114, histidine 116, and histidine 131. Residues histidine 131, histidine 139, histidine 142, and aspartate 145 each coordinate Zn(2+). Position 181 (histidine 181) interacts with Cu cation. N-linked (Glc) (glycation) lysine; in vitro glycans are attached at residues lysine 229 and lysine 230.

It belongs to the Cu-Zn superoxide dismutase family. As to quaternary structure, homotetramer. Directly interacts with ATP7A; this interaction is copper-dependent and is required for SOD3 activity. Cu cation is required as a cofactor. Requires Zn(2+) as cofactor. Expressed in blood vessels, heart, lung, kidney and placenta. Major SOD isoenzyme in extracellular fluids such as plasma, lymph and synovial fluid.

The protein localises to the secreted. The protein resides in the extracellular space. It localises to the golgi apparatus. Its subcellular location is the trans-Golgi network. The enzyme catalyses 2 superoxide + 2 H(+) = H2O2 + O2. In terms of biological role, protect the extracellular space from toxic effect of reactive oxygen intermediates by converting superoxide radicals into hydrogen peroxide and oxygen. The polypeptide is Extracellular superoxide dismutase [Cu-Zn] (SOD3) (Homo sapiens (Human)).